The following is a 1137-amino-acid chain: Otoancorin (1137 aa).

The first 23 residues, 1–23, serve as a signal peptide directing secretion; the sequence is MSQGPRTCSLLLVLLLSHGGAYQ. Residues Asn-156, Asn-211, Asn-244, Asn-289, Asn-321, Asn-380, Asn-384, Asn-530, Asn-594, Asn-740, and Asn-798 are each glycosylated (N-linked (GlcNAc...) asparagine). Residues 1095-1115 show a composition bias toward polar residues; it reads HSWQTDPLSSSPTWPASTGSP. The tract at residues 1095 to 1119 is disordered; that stretch reads HSWQTDPLSSSPTWPASTGSPTGEP. A lipid anchor (GPI-anchor amidated glycine) is attached at Gly-1113. A propeptide spans 1114–1137 (removed in mature form); the sequence is SPTGEPASQALWLGCTLLLLTAKS.

This sequence belongs to the stereocilin family. Expressed in the inner ear and vestibule.

Its subcellular location is the apical cell membrane. The protein resides in the secreted. The protein localises to the extracellular space. It is found in the extracellular matrix. Functionally, may act as an adhesion molecule. The chain is Otoancorin (Otoa) from Mus musculus (Mouse).